Consider the following 173-residue polypeptide: Ribosome maturation factor RimM (173 aa).

Positions 92 to 165 constitute a PRC barrel domain; sequence EGEFYHADLI…RVVIEMPGEI (74 aa).

It belongs to the RimM family. In terms of assembly, binds ribosomal protein uS19.

It localises to the cytoplasm. An accessory protein needed during the final step in the assembly of 30S ribosomal subunit, possibly for assembly of the head region. Essential for efficient processing of 16S rRNA. May be needed both before and after RbfA during the maturation of 16S rRNA. It has affinity for free ribosomal 30S subunits but not for 70S ribosomes. The protein is Ribosome maturation factor RimM of Nitrobacter hamburgensis (strain DSM 10229 / NCIMB 13809 / X14).